A 400-amino-acid chain; its full sequence is tRNA-specific 2-thiouridylase MnmA (400 aa).

ATP-binding positions include 19 to 26 (AMSGGVDS) and Leu45. Cys113 functions as the Nucleophile in the catalytic mechanism. Residues Cys113 and Cys210 are joined by a disulfide bond. Residue Gly137 coordinates ATP. Residues 160-162 (RDQ) form an interaction with tRNA region. Cys210 (cysteine persulfide intermediate) is an active-site residue.

This sequence belongs to the MnmA/TRMU family.

It is found in the cytoplasm. It carries out the reaction S-sulfanyl-L-cysteinyl-[protein] + uridine(34) in tRNA + AH2 + ATP = 2-thiouridine(34) in tRNA + L-cysteinyl-[protein] + A + AMP + diphosphate + H(+). Functionally, catalyzes the 2-thiolation of uridine at the wobble position (U34) of tRNA, leading to the formation of s(2)U34. This is tRNA-specific 2-thiouridylase MnmA from Nitrobacter hamburgensis (strain DSM 10229 / NCIMB 13809 / X14).